A 276-amino-acid chain; its full sequence is Ribosomal RNA small subunit methyltransferase A (276 aa).

S-adenosyl-L-methionine contacts are provided by Asn16, Leu18, Gly43, Glu64, Asp89, and Asn109.

This sequence belongs to the class I-like SAM-binding methyltransferase superfamily. rRNA adenine N(6)-methyltransferase family. RsmA subfamily.

The protein localises to the cytoplasm. The catalysed reaction is adenosine(1518)/adenosine(1519) in 16S rRNA + 4 S-adenosyl-L-methionine = N(6)-dimethyladenosine(1518)/N(6)-dimethyladenosine(1519) in 16S rRNA + 4 S-adenosyl-L-homocysteine + 4 H(+). In terms of biological role, specifically dimethylates two adjacent adenosines (A1518 and A1519) in the loop of a conserved hairpin near the 3'-end of 16S rRNA in the 30S particle. May play a critical role in biogenesis of 30S subunits. This Marinobacter nauticus (strain ATCC 700491 / DSM 11845 / VT8) (Marinobacter aquaeolei) protein is Ribosomal RNA small subunit methyltransferase A.